A 1099-amino-acid chain; its full sequence is Solute carrier family 38 member 10 (1099 aa).

10 consecutive transmembrane segments (helical) span residues 9–31 (WGLV…PFCF), 36–58 (IVLG…MFLV), 84–104 (LVET…YVVI), 123–143 (TFRV…LSLQ), 153–173 (FSAM…LSSF), 229–249 (IFAS…FFGY), 272–292 (MIRV…ILPC), 323–343 (VLTL…PNVE), 345–365 (ILGF…PALI), and 378–398 (VVLW…LSVS). Disordered stretches follow at residues 440–679 (DSQE…EEAG) and 720–1047 (EIRQ…LAPK). Residue S441 is modified to Phosphoserine. 5 stretches are compositionally biased toward basic and acidic residues: residues 441 to 454 (SQEK…KEVL), 493 to 508 (EAHR…KVVV), 517 to 528 (PEEKKPPPKLPD), 544 to 561 (ESEK…KRPE), and 586 to 599 (PRKE…RDLH). Phosphoserine occurs at positions 607 and 635. Basic and acidic residues-rich tracts occupy residues 653–663 (EAAEQREKNEA), 720–735 (EIRQ…KPKP), and 749–766 (GQEE…HAGE). A coiled-coil region spans residues 698–734 (VQQKRLLDQQEKLLAVIEEQHKEIRQQRQEGEEDKPK). T767 carries the post-translational modification Phosphothreonine. Basic and acidic residues-rich tracts occupy residues 793 to 802 (KGQHPLEEVK), 852 to 894 (EPVH…ETGK), 917 to 928 (EDSHSKSRHSEP), 957 to 969 (KSQD…RSEG), and 1010 to 1022 (QKPE…RDLK). A Phosphoserine modification is found at S886.

It belongs to the amino acid/polyamine transporter 2 family. Only expressed in the pituitary, adrenal gland, stomach and in the upper gastrointestinal tract.

The protein localises to the membrane. It carries out the reaction L-glutamate(out) = L-glutamate(in). It catalyses the reaction L-glutamine(out) = L-glutamine(in). The enzyme catalyses L-alanine(in) = L-alanine(out). The catalysed reaction is L-serine(in) = L-serine(out). It carries out the reaction L-leucine(in) = L-leucine(out). Functionally, facilitates bidirectional transport of amino acids. May act as a glutamate sensor that regulates glutamate-glutamine cycle and mTOR signaling in the brain. The transport mechanism remains to be elucidated. The protein is Solute carrier family 38 member 10 of Rattus norvegicus (Rat).